A 269-amino-acid polypeptide reads, in one-letter code: Neurotrophic factor BDNF precursor form (269 aa).

The first 18 residues, 1-18 (MTILFLTMVISYFSCMRA), serve as a signal peptide directing secretion. The propeptide occupies 19-150 (APLRDAPGMR…AANMSMRVRR (132 aa)). 2 disordered regions span residues 39-61 (AATA…REEL) and 82-104 (AAHV…VATA). N-linked (GlcNAc...) asparagine glycosylation occurs at Asn-143. 3 disulfide bridges follow: Cys-163–Cys-230, Cys-208–Cys-259, and Cys-218–Cys-261.

Belongs to the NGF-beta family.

Functionally, BDNF promotes the survival of neuronal populations that are all located either in the central nervous system or directly connected to it. In Xiphophorus maculatus (Southern platyfish), this protein is Neurotrophic factor BDNF precursor form (bdnf).